Here is a 279-residue protein sequence, read N- to C-terminus: Acetyl-coenzyme A carboxylase carboxyl transferase subunit beta (279 aa).

In terms of domain architecture, CoA carboxyltransferase N-terminal spans 23–279 (LWWKCESCGA…LSQILGHLSS (257 aa)). Residues C27, C30, C46, and C49 each contribute to the Zn(2+) site. A C4-type zinc finger spans residues 27-49 (CESCGAMLHKKQVEDHFYTCCEC).

Belongs to the AccD/PCCB family. In terms of assembly, acetyl-CoA carboxylase is a heterohexamer composed of biotin carboxyl carrier protein (AccB), biotin carboxylase (AccC) and two subunits each of ACCase subunit alpha (AccA) and ACCase subunit beta (AccD). Zn(2+) is required as a cofactor.

It localises to the cytoplasm. It carries out the reaction N(6)-carboxybiotinyl-L-lysyl-[protein] + acetyl-CoA = N(6)-biotinyl-L-lysyl-[protein] + malonyl-CoA. Its pathway is lipid metabolism; malonyl-CoA biosynthesis; malonyl-CoA from acetyl-CoA: step 1/1. Component of the acetyl coenzyme A carboxylase (ACC) complex. Biotin carboxylase (BC) catalyzes the carboxylation of biotin on its carrier protein (BCCP) and then the CO(2) group is transferred by the transcarboxylase to acetyl-CoA to form malonyl-CoA. The sequence is that of Acetyl-coenzyme A carboxylase carboxyl transferase subunit beta from Prosthecochloris aestuarii (strain DSM 271 / SK 413).